The primary structure comprises 476 residues: Bifunctional protein HldE (476 aa).

The tract at residues 1-319 (MKVTLPAFEK…GALASHQGES (319 aa)) is ribokinase. 195-198 (NMSE) is a binding site for ATP. D264 is an active-site residue. The cytidylyltransferase stretch occupies residues 345–476 (MTNGCFDILH…SIIQNIMARQ (132 aa)).

The protein in the N-terminal section; belongs to the carbohydrate kinase PfkB family. This sequence in the C-terminal section; belongs to the cytidylyltransferase family. In terms of assembly, homodimer.

The enzyme catalyses D-glycero-beta-D-manno-heptose 7-phosphate + ATP = D-glycero-beta-D-manno-heptose 1,7-bisphosphate + ADP + H(+). It catalyses the reaction D-glycero-beta-D-manno-heptose 1-phosphate + ATP + H(+) = ADP-D-glycero-beta-D-manno-heptose + diphosphate. Its pathway is nucleotide-sugar biosynthesis; ADP-L-glycero-beta-D-manno-heptose biosynthesis; ADP-L-glycero-beta-D-manno-heptose from D-glycero-beta-D-manno-heptose 7-phosphate: step 1/4. The protein operates within nucleotide-sugar biosynthesis; ADP-L-glycero-beta-D-manno-heptose biosynthesis; ADP-L-glycero-beta-D-manno-heptose from D-glycero-beta-D-manno-heptose 7-phosphate: step 3/4. Catalyzes the phosphorylation of D-glycero-D-manno-heptose 7-phosphate at the C-1 position to selectively form D-glycero-beta-D-manno-heptose-1,7-bisphosphate. Its function is as follows. Catalyzes the ADP transfer from ATP to D-glycero-beta-D-manno-heptose 1-phosphate, yielding ADP-D-glycero-beta-D-manno-heptose. In Shewanella denitrificans (strain OS217 / ATCC BAA-1090 / DSM 15013), this protein is Bifunctional protein HldE.